Consider the following 130-residue polypeptide: Large ribosomal subunit protein eL22 (130 aa).

The tract at residues 1 to 21 is disordered; it reads MPGKTAQKGGRPSGKGKKKKQ. The Nuclear localization signal motif lies at 17–20; sequence KKKK.

This sequence belongs to the eukaryotic ribosomal protein eL22 family.

The chain is Large ribosomal subunit protein eL22 (RPL22) from Tripneustes gratilla (Hawaian sea urchin).